The following is a 902-amino-acid chain: Androgen receptor (902 aa).

The modulating stretch occupies residues 1-540 (MEVQLGLGRV…PIDYYFPPQK (540 aa)). An interaction with ZNF318 region spans residues 1 to 569 (MEVQLGLGRV…GSCKVFFKRA (569 aa)). Disordered stretches follow at residues 35–146 (QNPG…LSLL) and 194–224 (QQEV…YLGG). Ser61 carries the phosphoserine; by CDK9 modification. The residue at position 75 (Ser75) is a Phosphoserine. Low complexity predominate over residues 94 to 103 (QPSQQQSASE). Polar residues-rich tracts occupy residues 196 to 205 (EVISEGSSSV) and 213 to 224 (APSSSKDSYLGG). Residue Tyr221 is modified to Phosphotyrosine; by CSK. A Phosphoserine modification is found at Ser254. A Phosphotyrosine; by CSK and TNK2 modification is found at Tyr265. Residue Ser290 is modified to Phosphoserine. Tyr305, Tyr344, Tyr355, and Tyr360 each carry phosphotyrosine; by CSK. Tyr361 carries the phosphotyrosine; by CSK and TNK2 modification. A Glycyl lysine isopeptide (Lys-Gly) (interchain with G-Cter in SUMO) cross-link involves residue Lys384. Tyr391 carries the post-translational modification Phosphotyrosine; by CSK. Residues 439–465 (EGQLYGPGGGGGSSSPSDAGPVAPYGY) are disordered. A Glycyl lysine isopeptide (Lys-Gly) (interchain with G-Cter in SUMO) cross-link involves residue Lys503. Phosphotyrosine; by CSK occurs at positions 517 and 534. An interaction with LPXN region spans residues 534–901 (YYFPPQKTCL…GKVKPIYFHT (368 aa)). Residues 541–614 (TCLICGDEAS…AGMTLGARKL (74 aa)) constitute a DNA-binding region (nuclear receptor). 2 NR C4-type zinc fingers span residues 542–562 (CLIC…CGSC) and 578–602 (CASR…LRKC). Residues 554-644 (YGALTCGSCK…TEDPSQKMTV (91 aa)) are interaction with HIPK3. Residues 574-901 (QKYLCASRND…GKVKPIYFHT (328 aa)) are interaction with CCAR1. The interval 607–901 (MTLGARKLKK…GKVKPIYFHT (295 aa)) is interaction with KAT7. Ser633 carries the post-translational modification Phosphoserine. The NR LBD domain maps to 651 to 882 (ECQPIFLNVL…DFPEMMAEII (232 aa)). 17beta-hydroxy-5alpha-androstan-3-one-binding residues include Asn688 and Arg735. Glycyl lysine isopeptide (Lys-Gly) (interchain with G-Cter in ubiquitin) cross-links involve residues Lys828 and Lys830. A 17beta-hydroxy-5alpha-androstan-3-one-binding site is contributed by Thr860. Tyr898 is modified (phosphotyrosine; by CSK).

This sequence belongs to the nuclear hormone receptor family. NR3 subfamily. In terms of assembly, binds DNA as a homodimer. Part of a ternary complex containing AR, EFCAB6/DJBP and PARK7. Interacts with HIPK3 and NR0B2 in the presence of androgen. The ligand binding domain interacts with KAT7/HBO1 in the presence of dihydrotestosterone. Interacts with EFCAB6/DJBP, PQBP1, RANBP9, RBAK, SPDEF, SRA1, TGFB1I1, ZNF318 and RREB1. Interacts with ZMIZ1/ZIMP10 and ZMIZ2/ZMIP7 which both enhance its transactivation activity. Interacts with SLC30A9 and RAD54L2/ARIP4. Interacts with MACROD1 (via macro domain). Interacts via the ligand-binding domain with LXXLL and FXXLF motifs from NCOA1, NCOA2, NCOA3 and MAGEA11. Interacts (via nuclear receptor DNA binding domain and nuclear receptor ligand binding domain) with NCOA4. The AR N-terminal poly-Gln region binds Ran resulting in enhancement of AR-mediated transactivation. Ran-binding decreases as the poly-Gln length increases. Interacts with HIP1 (via coiled coil domain). Interacts (via ligand-binding domain) with TRIM68. Interacts with TNK2. Interacts with USP26. Interacts with RNF6. Interacts (regulated by RNF6 probably through polyubiquitination) with RNF14; regulates AR transcriptional activity. Interacts with PRMT2 and TRIM24. Interacts with RACK1. Interacts with RANBP10; this interaction enhances dihydrotestosterone-induced AR transcriptional activity. Interacts with PRPF6 in a hormone-independent way; this interaction enhances dihydrotestosterone-induced AR transcriptional activity. Interacts with STK4/MST1. Interacts with ZIPK/DAPK3. Interacts with LPXN. Interacts with MAK. Part of a complex containing AR, MAK and NCOA3. Interacts with CRY1. Interacts with CCAR1 and GATA2. Interacts with BUD31. Interacts with ARID4A. Interacts with ARID4B. Interacts (via NR LBD domain) with ZBTB7A; the interaction is direct and androgen-dependent. Interacts with NCOR1. Interacts with NCOR2. Interacts with CRY2 in a ligand-dependent manner. In terms of processing, phosphorylated in prostate cancer cells in response to several growth factors including EGF. Phosphorylation is induced by c-Src kinase (CSK). Tyr-517 is one of the major phosphorylation sites and an increase in phosphorylation and Src kinase activity is associated with prostate cancer progression. Phosphorylation by TNK2 enhances the DNA-binding and transcriptional activity. Phosphorylation at Ser-61 by CDK9 regulates AR promoter selectivity and cell growth. Phosphorylation by PAK6 leads to AR-mediated transcription inhibition. Sumoylated on Lys-384 (major) and Lys-503. Ubiquitinated. Deubiquitinated by USP26. 'Lys-6' and 'Lys-27'-linked polyubiquitination by RNF6 modulates AR transcriptional activity and specificity. Post-translationally, palmitoylated by ZDHHC7 and ZDHHC21. Palmitoylation is required for plasma membrane targeting and for rapid intracellular signaling via ERK and AKT kinases and cAMP generation. As to expression, highest levels in the seminal vesicle, ventral prostate and coagulating gland with lower levels in the kidney and levator ani muscle.

It localises to the nucleus. The protein localises to the cytoplasm. In terms of biological role, steroid hormone receptors are ligand-activated transcription factors that regulate eukaryotic gene expression and affect cellular proliferation and differentiation in target tissues. Transcription factor activity is modulated by bound coactivator and corepressor proteins like ZBTB7A that recruits NCOR1 and NCOR2 to the androgen response elements/ARE on target genes, negatively regulating androgen receptor signaling and androgen-induced cell proliferation. Transcription activation is also down-regulated by NR0B2. Activated, but not phosphorylated, by HIPK3 and ZIPK/DAPK3. This chain is Androgen receptor (Ar), found in Rattus norvegicus (Rat).